Here is a 36-residue protein sequence, read N- to C-terminus: Photosystem I reaction center subunit VIII (36 aa).

A helical transmembrane segment spans residues S8–L28.

Belongs to the PsaI family.

Its subcellular location is the plastid. The protein localises to the chloroplast thylakoid membrane. May help in the organization of the PsaL subunit. This is Photosystem I reaction center subunit VIII from Helianthus annuus (Common sunflower).